We begin with the raw amino-acid sequence, 420 residues long: uncharacterized protein (420 aa).

The YcaO domain maps to 79–420; the sequence is GKGIDNEAAM…AVNTIRGAES (342 aa).

This is an uncharacterized protein from Rhizobium leguminosarum bv. trifolii.